The primary structure comprises 404 residues: MAKQTVADLKDIKGKKVLVRVDFNVPIKGGVIGDDNRIVAALPTIQYIIDNGGKAILLSHLGRIKSDEDKKELTLKPVAARLGELLNKDVAFVASNEGQELEDAINAMTDGQVLVMENTRFQDIDNDFGKRESKNDPKLGEYWASLGDMFVNDAFGTAHRAHASNVGIATAMKANNKPAVAGYLLEKEIKFLGEAVDAPERPFVAILGGAKVSDKIGVIEHLLAKADKVIVGGGMTYTFYAAKGLSIGNSLVEEDKIELAKELIEKAGDKLVLPVDNVVADAFSNDAKTETVEGNIPDGYMALDIGPKAIADFENVLKDAKTVVWNGPMGVFEMDNFAKGTLAIGEFLGNLSGATTIVGGGDSTAAVKKLGVGDKLTHISTGGGASLEYLEGKTLPGIAAISDK.

Substrate is bound by residues 22-24 (DFN), arginine 37, 60-63 (HLGR), arginine 120, and arginine 160. Residues lysine 215, glutamate 333, and 360–363 (GGDS) contribute to the ATP site.

It belongs to the phosphoglycerate kinase family. Monomer.

It is found in the cytoplasm. The enzyme catalyses (2R)-3-phosphoglycerate + ATP = (2R)-3-phospho-glyceroyl phosphate + ADP. It participates in carbohydrate degradation; glycolysis; pyruvate from D-glyceraldehyde 3-phosphate: step 2/5. This Latilactobacillus sakei subsp. sakei (strain 23K) (Lactobacillus sakei subsp. sakei) protein is Phosphoglycerate kinase.